A 267-amino-acid chain; its full sequence is Zein-alpha Z4 (267 aa).

A signal peptide spans 1–21 (MAAKIFCLIMLLGLSASAATA).

The protein belongs to the zein family.

In terms of biological role, zeins are major seed storage proteins. This chain is Zein-alpha Z4, found in Zea mays (Maize).